A 336-amino-acid polypeptide reads, in one-letter code: Inactive serine/threonine-protein kinase BKN2 (336 aa).

The tract at residues Met-1–Ser-25 is disordered. Gly-2 carries N-myristoyl glycine lipidation. Residue Cys-4 is the site of S-palmitoyl cysteine attachment. The Protein kinase domain occupies Tyr-52–Ala-332.

The protein belongs to the protein kinase superfamily. Ser/Thr protein kinase family. In terms of assembly, component of an immune signaling complex made of, at least, SZE1, BKN2/SZE2, ZAR1 and ZED1. Interacts directly with ZAR1 and Pseudomonas syringae HOPZ1A at the plasma membrane. In terms of processing, N-terminal myristoylation is critical for plasma membrane localization and implication in defense responses. As to expression, expressed in stigma and ovaries in flowers, and in stems and seedlings.

It localises to the cell membrane. Its function is as follows. Together with SZE1 and ZED1, required for effector-triggered immunity (e.g. Pseudomonas syringae type III effector HopZ1a) via the activation of ZAR1, thus being essential for resistance against P. syringae pv. tomato DC3000 expressing HopZ1a. Collaboratively with BKN1, involved in compatible pollen-stigma interactions. The protein is Inactive serine/threonine-protein kinase BKN2 of Arabidopsis thaliana (Mouse-ear cress).